The sequence spans 1638 residues: MEAKPVPAPQPRPRAMAEPLHIQRLEAALNMRPFMNMAKRSLRKPLSSDEETDDEHVVKREHDVQDSDDSSTVGVVRMKQSSKRKSRLLASKEERQSVKAQLYNFNDLTSDREWLYDLLLSDTESDDPTITEDEYVQQLLREHVREQRQRKNYYKKAANAQYAYYGSGLLSNHDIFAERQLATAGVRKRRRRTKQEILMARLAEAQAGPKPPKQRRRGRKKRDNMGSPESGEVPPSELGKYTFGDTLPNNEDDDEDGGEVDYKRELASLALDYPEEEEIEEEVDVEGGTEGQVTKVRRKRKNPAALAARRRRIWQIMSKKESGRLQRIKSNNHKEMLANCKRVAGMCAKVVRQRAINSQRIMKETVWRAKRLTREMLAYWKRYERVERDQRRKQEREAEEQRKQDVELIEVKRQQRKLNFLITQTELYAHFMSKKLGQGSEEDQLRILSQLDEETNARLAAQDDYDAGEMKLLAQENAEAAMQRDLDKTRAFDVFAKKKEKEEEEQAQESVEDIKPEPRPEMKDLPQPKMFKGTLKGYQIKGMTWLANIYDQGISGILADEMGLGKTVQSIAFLCHIAEHYGVWGPFLVISPASTLHNWQQEMSRFVPDFKVVPYWGSPAERKILRQFWDQKHLHTRDASFHVVITSYQLVVSDYKYFNRIKWQYMVLDEAQAIKSAASQRWKLLLGFSCRNRLLLSGTPIQNSMAELWALLHFIMPTLFDSHDEFNEWFSKDIESHAENKTGIDEKQISRLHMILKPFMLRRIKKDVENELSDKIEIMVYCPLTIRQKLLYRALKQKIRIEDLLHLTSGSTTTSSSSSASNLMNLVMQFRKVCNHPELFERRDARSPFFMRCAEYTIPRLIHEEGLIHRMLPSRKHLLYNRFNIFKSEYIQRSLFEDVNVNSCFGFTRLCDLSVGDMVEVTLNGLIDFLLHYRRVLEKYPLLAYRRFWWKKQPDSRYQLLEPMLENKLALDYMPPNSVLKNFIFTAMTANESSVYAFGDYFTYNMQETIEHRVIRSKILKKKTSLIEEMEDVSKQKLEIESVEVQTKSNAKSDVKVTTLLLLPEFPHRPRKPRKYVCEPLSMPRILYDLGQKVQAVHRYLYCDSRSAAWSQIRHNQCENSQGRELVSSGLALCKPHGGWSSIVVPDKETLITDAGKLFVLDNLLTRLKANGHRVLIYSQMTKMIDLLEEYMWHRKHRYMRLDGSSKISARRDMVADFQTRADIFVFLLSTRAGGLGINLTAADTVIFYDSDWNPTVDQQAMDRAHRLGQTKQVTVYRLICKGTIEERILQRAREKSEIQRMVISGGNFKPDTLKPKEVVSLLLDDEEIEMKYRQEAKLQSSSPIPAATQSERKRRHPQKDVNMGGTTIAATSATQNPDDDVPSCSSAAKRIKLETEEDFIDVGITSSASSVGTDSNHPTLSQETYVPGATCVQQTEIDSENEALVVDGDSPTMLGQNESMNFLDDLSGISPMRRRHHPRGTRRGRPRGSTRRGGGHGSIPRVLTPTQAATPAVPATASQAAAAGTGAAAGTSSPLPQQEVSGGGDNAGVPLHEEEYRTSPSGQSPGVSCKRGPGRPRSKTATPISRGTRGAPRARRPMGPLLVPLGRSPDDTPPSSSPATSRAPSPLSGSHGAVGPE.

Residues 41-93 (SLRKPLSSDEETDDEHVVKREHDVQDSDDSSTVGVVRMKQSSKRKSRLLASKE) are disordered. 2 positions are modified to phosphoserine: serine 47 and serine 48. Phosphothreonine is present on threonine 52. Over residues 55-65 (EHVVKREHDVQ) the composition is skewed to basic and acidic residues. 2 positions are modified to phosphoserine: serine 67 and serine 70. The stretch at 136–161 (VQQLLREHVREQRQRKNYYKKAANAQ) forms a coiled coil. The segment at 201-259 (RLAEAQAGPKPPKQRRRGRKKRDNMGSPESGEVPPSELGKYTFGDTLPNNEDDDEDGGE) is disordered. The segment covering 212–222 (PKQRRRGRKKR) has biased composition (basic residues). Phosphoserine is present on residues serine 227 and serine 230. Residues 250–259 (NEDDDEDGGE) are compositionally biased toward acidic residues. The 126-residue stretch at 313–438 (IWQIMSKKES…AHFMSKKLGQ (126 aa)) folds into the DBINO domain. The segment at 499 to 528 (KEKEEEEQAQESVEDIKPEPRPEMKDLPQP) is disordered. The segment covering 502–511 (EEEEQAQESV) has biased composition (acidic residues). Residues 512–526 (EDIKPEPRPEMKDLP) are compositionally biased toward basic and acidic residues. A Helicase ATP-binding domain is found at 547-718 (ANIYDQGISG…WALLHFIMPT (172 aa)). Residue 560–567 (DEMGLGKT) participates in ATP binding. The Helicase C-terminal domain occupies 1160–1315 (VLDNLLTRLK…GGNFKPDTLK (156 aa)). Disordered regions lie at residues 1335 to 1364 (QEAKLQSSSPIPAATQSERKRRHPQKDVNM) and 1463 to 1638 (FLDD…VGPE). A compositionally biased stretch (polar residues) spans 1338–1350 (KLQSSSPIPAATQ). Residues 1473-1495 (MRRRHHPRGTRRGRPRGSTRRGG) show a composition bias toward basic residues. Low complexity-rich tracts occupy residues 1505–1534 (TPTQAATPAVPATASQAAAAGTGAAAGTSS) and 1618–1627 (SPATSRAPSP).

The protein belongs to the SNF2/RAD54 helicase family. As to quaternary structure, component of the chromatin remodeling Ino80 complex.

It is found in the nucleus. It catalyses the reaction ATP + H2O = ADP + phosphate + H(+). Its function is as follows. ATPase component of the chromatin remodeling INO80 complex which is involved in transcriptional regulation, DNA replication and DNA repair. Binds DNA. As part of the INO80 complex, remodels chromatin by shifting nucleosomes. The protein is Chromatin-remodeling ATPase INO80 of Drosophila melanogaster (Fruit fly).